The sequence spans 385 residues: Mitochondrial fission regulator 2 (385 aa).

Residue Ser-2 is modified to N-acetylserine. Ser-119 carries the post-translational modification Phosphoserine. The interval 195–268 is disordered; sequence SVDPDQLPGS…SHHSKSQRNK (74 aa). The span at 207 to 216 shows a compositional bias: pro residues; that stretch reads SPPPPPPLPP. Over residues 231 to 257 the composition is skewed to polar residues; the sequence is PGSNNICDSDNPATEMSKQNPAANKTN. Phosphoserine is present on residues Ser-291 and Ser-328. The disordered stretch occupies residues 331-363; sequence KENRSWESSPFSSPETSRFGHHISQSEGQRTKE. Residues 336 to 346 are compositionally biased toward polar residues; that stretch reads WESSPFSSPET.

Belongs to the MTFR1 family.

It localises to the mitochondrion. Functionally, may play a role in mitochondrial aerobic respiration essentially in the testis. Can also promote mitochondrial fission. In Homo sapiens (Human), this protein is Mitochondrial fission regulator 2 (MTFR2).